The sequence spans 454 residues: tRNA modification GTPase MnmE (454 aa).

(6S)-5-formyl-5,6,7,8-tetrahydrofolate-binding residues include Arg23, Glu80, and Lys120. The region spanning 216-377 (GMKVVIAGRP…LRDHLKQSMG (162 aa)) is the TrmE-type G domain. Asn226 lines the K(+) pocket. Residues 226–231 (NAGKSS), 245–251 (TDIAGTT), 270–273 (DTAG), 335–338 (NKAD), and 358–360 (SAR) each bind GTP. Mg(2+) is bound at residue Ser230. K(+) is bound by residues Thr245, Ile247, and Thr250. Residue Thr251 participates in Mg(2+) binding. Lys454 contacts (6S)-5-formyl-5,6,7,8-tetrahydrofolate.

Belongs to the TRAFAC class TrmE-Era-EngA-EngB-Septin-like GTPase superfamily. TrmE GTPase family. Homodimer. Heterotetramer of two MnmE and two MnmG subunits. The cofactor is K(+).

It localises to the cytoplasm. Functionally, exhibits a very high intrinsic GTPase hydrolysis rate. Involved in the addition of a carboxymethylaminomethyl (cmnm) group at the wobble position (U34) of certain tRNAs, forming tRNA-cmnm(5)s(2)U34. The polypeptide is tRNA modification GTPase MnmE (Yersinia pestis bv. Antiqua (strain Antiqua)).